Reading from the N-terminus, the 106-residue chain is Urease subunit beta (106 aa).

It belongs to the urease beta subunit family. Heterotrimer of UreA (gamma), UreB (beta) and UreC (alpha) subunits. Three heterotrimers associate to form the active enzyme.

The protein resides in the cytoplasm. The catalysed reaction is urea + 2 H2O + H(+) = hydrogencarbonate + 2 NH4(+). Its pathway is nitrogen metabolism; urea degradation; CO(2) and NH(3) from urea (urease route): step 1/1. This chain is Urease subunit beta, found in Prochlorococcus marinus (strain MIT 9301).